The primary structure comprises 1044 residues: Carbamoyl phosphate synthase large chain (1044 aa).

Residues 1–398 are carboxyphosphate synthetic domain; it reads MPKREDISKI…ALMKAIASLD (398 aa). Residues Arg-129, Arg-169, Gly-175, Gly-176, Arg-208, Leu-210, Glu-215, Gly-241, Val-242, His-243, Gln-284, and Glu-296 each coordinate ATP. One can recognise an ATP-grasp 1 domain in the interval 133–325; that stretch reads HDFLISIGER…IARIAAKIAV (193 aa). Mg(2+)-binding residues include Gln-284, Glu-296, and Asn-298. 3 residues coordinate Mn(2+): Gln-284, Glu-296, and Asn-298. Residues 399 to 539 are oligomerization domain; the sequence is IDLSYRLRLY…YSTYEDEDEL (141 aa). The interval 540–916 is carbamoyl phosphate synthetic domain; it reads PGISGFVAII…AIRKSILRDI (377 aa). In terms of domain architecture, ATP-grasp 2 spans 665-854; the sequence is SKRLEAMGID…WVELAVSAIM (190 aa). Residues Arg-701, Lys-738, Leu-740, Glu-745, Gly-770, Val-771, His-772, Ser-773, Gln-813, and Glu-825 each coordinate ATP. Mg(2+) is bound by residues Gln-813, Glu-825, and Asn-827. Mn(2+) is bound by residues Gln-813, Glu-825, and Asn-827. Positions 911 to 1044 constitute an MGS-like domain; the sequence is SILRDIKSVF…IDYREISSYH (134 aa). Residues 916 to 1044 are allosteric domain; sequence IKSVFISVRD…IDYREISSYH (129 aa).

It belongs to the CarB family. Composed of two chains; the small (or glutamine) chain promotes the hydrolysis of glutamine to ammonia, which is used by the large (or ammonia) chain to synthesize carbamoyl phosphate. Tetramer of heterodimers (alpha,beta)4. The cofactor is Mg(2+). Mn(2+) is required as a cofactor.

The enzyme catalyses hydrogencarbonate + L-glutamine + 2 ATP + H2O = carbamoyl phosphate + L-glutamate + 2 ADP + phosphate + 2 H(+). It carries out the reaction hydrogencarbonate + NH4(+) + 2 ATP = carbamoyl phosphate + 2 ADP + phosphate + 2 H(+). It functions in the pathway amino-acid biosynthesis; L-arginine biosynthesis; carbamoyl phosphate from bicarbonate: step 1/1. Its pathway is pyrimidine metabolism; UMP biosynthesis via de novo pathway; (S)-dihydroorotate from bicarbonate: step 1/3. Large subunit of the glutamine-dependent carbamoyl phosphate synthetase (CPSase). CPSase catalyzes the formation of carbamoyl phosphate from the ammonia moiety of glutamine, carbonate, and phosphate donated by ATP, constituting the first step of 2 biosynthetic pathways, one leading to arginine and/or urea and the other to pyrimidine nucleotides. The large subunit (synthetase) binds the substrates ammonia (free or transferred from glutamine from the small subunit), hydrogencarbonate and ATP and carries out an ATP-coupled ligase reaction, activating hydrogencarbonate by forming carboxy phosphate which reacts with ammonia to form carbamoyl phosphate. The chain is Carbamoyl phosphate synthase large chain from Thermoplasma volcanium (strain ATCC 51530 / DSM 4299 / JCM 9571 / NBRC 15438 / GSS1).